The sequence spans 163 residues: Phosphopantetheine adenylyltransferase (163 aa).

Residue S9 participates in substrate binding. Residues 9 to 10 (SF) and H17 each bind ATP. Positions 41, 73, and 87 each coordinate substrate. Residues 88–90 (GLR), E98, and 123–129 (YAYFSSS) contribute to the ATP site.

Belongs to the bacterial CoaD family. Homohexamer. Requires Mg(2+) as cofactor.

The protein resides in the cytoplasm. The catalysed reaction is (R)-4'-phosphopantetheine + ATP + H(+) = 3'-dephospho-CoA + diphosphate. The protein operates within cofactor biosynthesis; coenzyme A biosynthesis; CoA from (R)-pantothenate: step 4/5. Functionally, reversibly transfers an adenylyl group from ATP to 4'-phosphopantetheine, yielding dephospho-CoA (dPCoA) and pyrophosphate. The polypeptide is Phosphopantetheine adenylyltransferase (Lactiplantibacillus plantarum (strain ATCC BAA-793 / NCIMB 8826 / WCFS1) (Lactobacillus plantarum)).